The chain runs to 491 residues: MKFKRLATIFSAVLVLSGCGSMHSSGKDLNISLPLKTKSIAPYETDVPVKIGAAESLFKTNDQGKIEKALVKSYHQPNDTTLDIELKDNIKFQNGQKLTAEKVKSSLENSMKKSDLVKYSLPISSITAKGQKLTIKTNSAYPELVSELANPFMAIYDTDAKSDVNQTPVGTGPYQIKDYKQSRKISLSNFKDYWQGKPKLDHITVTYQEDGNNRVRNLESQKDDLITDVPVNKVQDIENNQNLKVSKESGFRTSLLMYNHTNKKMTKSVREALDHIIDRQGIADHIYQGYAKPATSPFNDKIPYIKEPKLTKQNIEQAKMLLAKDGYTKEHPLKIKLITYDGRPELSKIAQVLQSDAKKANIEIDIKSVDDIEGYLKDRSAWDATMYSFGTIPRGDTGYFFNQAYKKDGAINKGDYNNSNVDDLINQLNHTVDVKERHNISNDIIKLSSRDVPNSYIAYNDQIVAANSKVKNYKVTPEGIYLIDYRTTIER.

Positions 1-18 are cleaved as a signal peptide; that stretch reads MKFKRLATIFSAVLVLSG. A lipid anchor (N-palmitoyl cysteine) is attached at Cys19. A lipid anchor (S-diacylglycerol cysteine) is attached at Cys19.

It belongs to the bacterial solute-binding protein 5 family. In terms of assembly, the complex is composed of two ATP-binding proteins (NikD and NikE), two transmembrane proteins (NikB and NikC) and a solute-binding protein (NikA).

The protein resides in the cell membrane. Its function is as follows. Part of the ABC transporter complex NikABCDE (Opp2) involved in nickel import. Binds nickel and transfers it to the membrane-bound permease. Required for full urease activity and plays a significant role in the virulence of S.aureus during urinary tract infection (UTI). May bind nickel via a nickel-chelator. This is Nickel-binding protein NikA from Staphylococcus aureus (strain NCTC 8325 / PS 47).